The primary structure comprises 326 residues: Vacuolar protein sorting-associated protein 26A (326 aa).

The protein belongs to the VPS26 family. In terms of assembly, component of the heterotrimeric retromer cargo-selective complex (CSC) which is believed to associate with variable sorting nexins to form functionally distinct retromer complex variants.

The protein localises to the cytoplasm. Its subcellular location is the endosome membrane. It localises to the early endosome. Acts as a component of the retromer cargo-selective complex (CSC). The CSC is believed to be the core functional component of retromer or respective retromer complex variants acting to prevent missorting of selected transmembrane cargo proteins into the lysosomal degradation pathway. Retromer mediates retrograde transport of cargo proteins from endosomes to the trans-Golgi network (TGN). This is Vacuolar protein sorting-associated protein 26A (vps26a) from Xenopus tropicalis (Western clawed frog).